The chain runs to 304 residues: Glutaminase (304 aa).

Positions 63, 113, 157, 164, 188, 240, and 258 each coordinate substrate.

Belongs to the glutaminase family. Homotetramer.

It catalyses the reaction L-glutamine + H2O = L-glutamate + NH4(+). The polypeptide is Glutaminase (Paraburkholderia phytofirmans (strain DSM 17436 / LMG 22146 / PsJN) (Burkholderia phytofirmans)).